The chain runs to 348 residues: Holliday junction branch migration complex subunit RuvB (348 aa).

Positions 4-184 (ADRLIAASGR…FGIVQRLEFY (181 aa)) are large ATPase domain (RuvB-L). ATP is bound by residues isoleucine 23, arginine 24, glycine 65, lysine 68, threonine 69, threonine 70, 131–133 (EDF), arginine 174, tyrosine 184, and arginine 221. Residue threonine 69 coordinates Mg(2+). Positions 185 to 255 (NDKDLSTIVS…VADMALNLLD (71 aa)) are small ATPAse domain (RuvB-S). The head domain (RuvB-H) stretch occupies residues 258 to 348 (ERGFDHSDRR…GGDFSEPGDE (91 aa)). Residues arginine 294, arginine 313, and arginine 318 each contribute to the DNA site.

It belongs to the RuvB family. Homohexamer. Forms an RuvA(8)-RuvB(12)-Holliday junction (HJ) complex. HJ DNA is sandwiched between 2 RuvA tetramers; dsDNA enters through RuvA and exits via RuvB. An RuvB hexamer assembles on each DNA strand where it exits the tetramer. Each RuvB hexamer is contacted by two RuvA subunits (via domain III) on 2 adjacent RuvB subunits; this complex drives branch migration. In the full resolvosome a probable DNA-RuvA(4)-RuvB(12)-RuvC(2) complex forms which resolves the HJ.

It is found in the cytoplasm. It catalyses the reaction ATP + H2O = ADP + phosphate + H(+). In terms of biological role, the RuvA-RuvB-RuvC complex processes Holliday junction (HJ) DNA during genetic recombination and DNA repair, while the RuvA-RuvB complex plays an important role in the rescue of blocked DNA replication forks via replication fork reversal (RFR). RuvA specifically binds to HJ cruciform DNA, conferring on it an open structure. The RuvB hexamer acts as an ATP-dependent pump, pulling dsDNA into and through the RuvAB complex. RuvB forms 2 homohexamers on either side of HJ DNA bound by 1 or 2 RuvA tetramers; 4 subunits per hexamer contact DNA at a time. Coordinated motions by a converter formed by DNA-disengaged RuvB subunits stimulates ATP hydrolysis and nucleotide exchange. Immobilization of the converter enables RuvB to convert the ATP-contained energy into a lever motion, pulling 2 nucleotides of DNA out of the RuvA tetramer per ATP hydrolyzed, thus driving DNA branch migration. The RuvB motors rotate together with the DNA substrate, which together with the progressing nucleotide cycle form the mechanistic basis for DNA recombination by continuous HJ branch migration. Branch migration allows RuvC to scan DNA until it finds its consensus sequence, where it cleaves and resolves cruciform DNA. This is Holliday junction branch migration complex subunit RuvB from Pseudomonas putida (strain ATCC 47054 / DSM 6125 / CFBP 8728 / NCIMB 11950 / KT2440).